Consider the following 216-residue polypeptide: Small ribosomal subunit protein uS3 (216 aa).

The KH type-2 domain maps to 38–108; the sequence is LREFVKKKLH…DLAIDIQEVK (71 aa).

The protein belongs to the universal ribosomal protein uS3 family. Part of the 30S ribosomal subunit. Forms a tight complex with proteins S10 and S14.

Binds the lower part of the 30S subunit head. Binds mRNA in the 70S ribosome, positioning it for translation. The polypeptide is Small ribosomal subunit protein uS3 (Desulfosudis oleivorans (strain DSM 6200 / JCM 39069 / Hxd3) (Desulfococcus oleovorans)).